Consider the following 239-residue polypeptide: 1-(5-phosphoribosyl)-5-[(5-phosphoribosylamino)methylideneamino] imidazole-4-carboxamide isomerase (239 aa).

Residue D8 is the Proton acceptor of the active site. The active-site Proton donor is the D130.

Belongs to the HisA/HisF family.

Its subcellular location is the cytoplasm. It carries out the reaction 1-(5-phospho-beta-D-ribosyl)-5-[(5-phospho-beta-D-ribosylamino)methylideneamino]imidazole-4-carboxamide = 5-[(5-phospho-1-deoxy-D-ribulos-1-ylimino)methylamino]-1-(5-phospho-beta-D-ribosyl)imidazole-4-carboxamide. It functions in the pathway amino-acid biosynthesis; L-histidine biosynthesis; L-histidine from 5-phospho-alpha-D-ribose 1-diphosphate: step 4/9. The sequence is that of 1-(5-phosphoribosyl)-5-[(5-phosphoribosylamino)methylideneamino] imidazole-4-carboxamide isomerase from Lachnoclostridium phytofermentans (strain ATCC 700394 / DSM 18823 / ISDg) (Clostridium phytofermentans).